The chain runs to 1206 residues: uncharacterized protein (1206 aa).

3 disordered regions span residues 133 to 547 (YDLD…PVDY), 568 to 837 (FASS…DQLL), and 859 to 1206 (RQRA…KATS). 2 stretches are compositionally biased toward pro residues: residues 139–151 (IPPP…PGPP) and 159–234 (GESP…PPAP). Position 255 is a phosphoserine (serine 255). The span at 305–319 (VRTSSIPVQEAPGAS) shows a compositional bias: low complexity. A compositionally biased stretch (basic and acidic residues) spans 351-363 (RALEPEQPREPRP). A compositionally biased stretch (pro residues) spans 384–413 (APPPAPPLPPPAPPLPPPAPSLPPAAPPLP). A compositionally biased stretch (low complexity) spans 414 to 436 (STELAAPPSSGFMKTSKSNSPAL). Positions 454 to 467 (VDWRDPRQMEKLRS) are enriched in basic and acidic residues. Residues 522–531 (PEKSPSSSSL) show a composition bias toward low complexity. Over residues 568-577 (FASSAEKEAK) the composition is skewed to basic and acidic residues. Positions 656 to 671 (LPKATPGLTLPLKPTP) are enriched in low complexity. Position 680 is a phosphothreonine (threonine 680). The segment covering 732–747 (AEKDLASVRQREKPET) has biased composition (basic and acidic residues). Residues 1001 to 1016 (IPPPPEFSNDPEPPAP) are compositionally biased toward pro residues. Residues 1028–1041 (PRNNFSDLGQSWGP) are compositionally biased toward polar residues. Residues arginine 1051, arginine 1083, and arginine 1094 each carry the omega-N-methylarginine modification. Positions 1170 to 1184 (PHGNTHYGSPINTFT) are enriched in polar residues.

This is an uncharacterized protein from Mus musculus (Mouse).